The following is a 138-amino-acid chain: Large ribosomal subunit protein uL16 (138 aa).

Over residues 1 to 13 the composition is skewed to basic residues; that stretch reads MLQPKRRKYRKEQ. The segment at 1-24 is disordered; sequence MLQPKRRKYRKEQKGRNTGKATRG.

It belongs to the universal ribosomal protein uL16 family. Part of the 50S ribosomal subunit.

Binds 23S rRNA and is also seen to make contacts with the A and possibly P site tRNAs. The sequence is that of Large ribosomal subunit protein uL16 from Cupriavidus necator (strain ATCC 17699 / DSM 428 / KCTC 22496 / NCIMB 10442 / H16 / Stanier 337) (Ralstonia eutropha).